Consider the following 156-residue polypeptide: Small ribosomal subunit protein uS7 (156 aa).

Belongs to the universal ribosomal protein uS7 family. As to quaternary structure, part of the 30S ribosomal subunit. Contacts proteins S9 and S11.

Functionally, one of the primary rRNA binding proteins, it binds directly to 16S rRNA where it nucleates assembly of the head domain of the 30S subunit. Is located at the subunit interface close to the decoding center, probably blocks exit of the E-site tRNA. This Campylobacter jejuni subsp. jejuni serotype O:6 (strain 81116 / NCTC 11828) protein is Small ribosomal subunit protein uS7.